Here is a 335-residue protein sequence, read N- to C-terminus: Teichoic acids export ATP-binding protein TagH (335 aa).

The ABC transporter domain occupies 26–246 (IKGLFMPKSQ…YDEFVKWFNK (221 aa)). 60 to 67 (GINGSGKS) serves as a coordination point for ATP.

It belongs to the ABC transporter superfamily. Teichoic acids exporter (TC 3.A.1.104.1) family. As to quaternary structure, the complex is composed of two ATP-binding proteins (TagH) and two transmembrane proteins (TagG).

The protein resides in the cell membrane. It catalyses the reaction ATP + H2O + teichoic acidSide 1 = ADP + phosphate + teichoic acidSide 2.. Its function is as follows. Part of the ABC transporter complex TagGH involved in teichoic acids export. Responsible for energy coupling to the transport system. The chain is Teichoic acids export ATP-binding protein TagH from Listeria innocua serovar 6a (strain ATCC BAA-680 / CLIP 11262).